A 1045-amino-acid polypeptide reads, in one-letter code: MEVALPNVPTKMQHPFTKYSEWKFKLFRVKSLERRPSEEETEGSEVSYNSSQETYPKSTVVLEDLSLGSAPQSPTNFKPQQSEKSNVVDNHETDLKRLEEEAHITVIQQLCRICGASFKMDQQNRSYPVHGPVDSETHDILRRREKKVTSWPELISKVFKTDVRADVDTIHPTQFCHNCWTIMNQKFSNISSEVYFPHNQAVEWTPHSANCYVCHSSKPWGKRKSAPQLNPHKMKKRKRGPEFVKKSKTSSGNSIQWKNMKAFNQMKDSCKKIHLDNNLLVLDYPSDFVKSVSCLVCEHILSDPVQTSCKHLFCRICILKYIKLMGCYCPSCKYPCFPTDLTVPVKSYLNVLNALLLKCTVSGCDEEISLGKYSHHISKHKETKGKEVYAHINKGGRPRQHLLTLTRRAQKHRLRELKMQVKAFADKEEEGDVKSVCLTLFLLALRARNEHRQADELEAIMEGRGAGLHPAVCLAIRVNTFLSCSQYHKMYRTVKATTGRQIFQPLHALRNAEKALIPGYHTFEWRPPLKNVSTRTDVGIIDGLSGLNQSLDEYPVDTISKRFRYDAALVSALKDMEEDILEGLKAQDLDDYVSGPFTVVVKESCDGMGDVSEKHGSGPPVPEKAVRFSFTVMNISVPNKNGPVRIFEETKPNSELCCKPLCLMLADESDHETLTAILSPLIAEREAMKTAELLLEMGGILRNFKFSFRGTGYDEKLVREVEGLEASGSLYICTLCDATRLEAAQNLVNHSITRSHCENLQRYEMWRSNPHHESPDELRDRVKGVSAKPFIETLPSIDALHCDIGNAAEFYRIFQLEIGELYKNLSATKEEKKRWQATLDNHIRKRMNLKPIMRMNGNFARKLMSKETVEAVCELVPCEERQAALTELMDLYLKMKPVWRSSCPAKECPELLCQYSFHSQRFAELLSTKFKYRYEGKITNYFHKTLAHVPEIIERDGSIGAWASEGNESGNKLFRRFRKMNARQSKFYEMEDVLKHHWLYTSKYLQKFMNAHNNLKNQGFTVDLDNPDLEQRLESSMESLESMEF.

Disordered regions lie at residues 33 to 55 (ERRP…QETY), 67 to 87 (LGSA…KSNV), and 222 to 253 (KRKS…SSGN). Polar residues-rich tracts occupy residues 44 to 55 (SEVSYNSSQETY) and 69 to 87 (SAPQ…KSNV). Residues C270, H274, C294, C297, H299, C309, H311, C314, C317, C329, C332, C359, C364, H376, and H380 each coordinate Zn(2+). The RING-type zinc-finger motif lies at 294–333 (CLVCEHILSDPVQTSCKHLFCRICILKYIKLMGCYCPSCK). The segment at 355–384 (LLLKCTVSGCDEEISLGKYSHHISKHKETK) adopts an RAG1-type zinc-finger fold. Residues 395 to 462 (GGRPRQHLLT…QADELEAIME (68 aa)) constitute a DNA-binding region (NBD). Positions 606, 714, and 968 each coordinate a divalent metal cation.

Belongs to the RAG1 family. As to quaternary structure, homodimer. Component of the RAG complex composed of core components rag1 and rag2. It depends on Mg(2+) as a cofactor. Requires Mn(2+) as cofactor. Expressed within the thymus, liver and spleen in juvenile frogs, and within the thymus and bone marrow of adults.

It localises to the nucleus. The enzyme catalyses S-ubiquitinyl-[E2 ubiquitin-conjugating enzyme]-L-cysteine + [acceptor protein]-L-lysine = [E2 ubiquitin-conjugating enzyme]-L-cysteine + N(6)-ubiquitinyl-[acceptor protein]-L-lysine.. Functionally, catalytic component of the RAG complex, a multiprotein complex that mediates the DNA cleavage phase during V(D)J recombination. V(D)J recombination assembles a diverse repertoire of immunoglobulin and T-cell receptor genes in developing B and T lymphocytes through rearrangement of different V (variable), in some cases D (diversity), and J (joining) gene segments. In the RAG complex, RAG1 mediates the DNA-binding to the conserved recombination signal sequences (RSS) and catalyzes the DNA cleavage activities by introducing a double-strand break between the RSS and the adjacent coding segment. RAG2 is not a catalytic component but is required for all known catalytic activities. DNA cleavage occurs in 2 steps: a first nick is introduced in the top strand immediately upstream of the heptamer, generating a 3'-hydroxyl group that can attack the phosphodiester bond on the opposite strand in a direct transesterification reaction, thereby creating 4 DNA ends: 2 hairpin coding ends and 2 blunt, 5'-phosphorylated ends. In addition to its endonuclease activity, RAG1 also acts as an E3 ubiquitin-protein ligase that mediates monoubiquitination of histone H3. Histone H3 monoubiquitination is required for the joining step of V(D)J recombination. This is V(D)J recombination-activating protein 1 (rag1) from Xenopus laevis (African clawed frog).